The chain runs to 338 residues: Adenylosuccinate synthetase (338 aa).

GTP is bound by residues 12–18 and 42–44; these read GDEGKGK and GHT. Asp13 (proton acceptor) is an active-site residue. Mg(2+)-binding residues include Asp13 and Gly42. Residues 13–16, 40–43, Thr127, Arg141, Gln179, Thr194, and Arg256 each bind IMP; these read DEGK and NAGH. The active-site Proton donor is His43. A substrate-binding site is contributed by 252 to 258; sequence TVTGRRR. Residues Arg258, 284–286, and 324–326 contribute to the GTP site; these read CLD and STG.

It belongs to the adenylosuccinate synthetase family. Homodimer. Requires Mg(2+) as cofactor.

It localises to the cytoplasm. It carries out the reaction IMP + L-aspartate + GTP = N(6)-(1,2-dicarboxyethyl)-AMP + GDP + phosphate + 2 H(+). It participates in purine metabolism; AMP biosynthesis via de novo pathway; AMP from IMP: step 1/2. Functionally, plays an important role in the de novo pathway of purine nucleotide biosynthesis. Catalyzes the first committed step in the biosynthesis of AMP from IMP. This is Adenylosuccinate synthetase from Methanococcus maripaludis (strain C7 / ATCC BAA-1331).